The chain runs to 316 residues: Transaldolase (316 aa).

Residue K125 is the Schiff-base intermediate with substrate of the active site.

The protein belongs to the transaldolase family. Type 1 subfamily. As to quaternary structure, homodimer.

The protein resides in the cytoplasm. It catalyses the reaction D-sedoheptulose 7-phosphate + D-glyceraldehyde 3-phosphate = D-erythrose 4-phosphate + beta-D-fructose 6-phosphate. It participates in carbohydrate degradation; pentose phosphate pathway; D-glyceraldehyde 3-phosphate and beta-D-fructose 6-phosphate from D-ribose 5-phosphate and D-xylulose 5-phosphate (non-oxidative stage): step 2/3. In terms of biological role, transaldolase is important for the balance of metabolites in the pentose-phosphate pathway. This is Transaldolase from Verminephrobacter eiseniae (strain EF01-2).